The chain runs to 666 residues: Zinc finger protein 710 (666 aa).

Residues lysine 110 and lysine 113 each participate in a glycyl lysine isopeptide (Lys-Gly) (interchain with G-Cter in SUMO2) cross-link. The disordered stretch occupies residues 113-141; the sequence is KAEEEEEQEVYEVSVPGDDKDPGPAEAPA. 3 C2H2-type zinc fingers span residues 297-319, 325-347, and 353-375; these read WQCR…ILGH, HSCP…LLTH, and HKCQ…MLLH. A Glycyl lysine isopeptide (Lys-Gly) (interchain with G-Cter in SUMO2) cross-link involves residue lysine 379. C2H2-type zinc fingers lie at residues 381 to 403, 409 to 431, 437 to 459, 465 to 487, 493 to 515, 521 to 543, 549 to 571, and 577 to 600; these read YSCH…EVKH, HVCV…LASH, YQCL…MLKH, FVCT…SLTH, FKCE…MLIH, YQCH…MIVH, FKCK…MHLH, and FKCP…KVKH.

This sequence belongs to the krueppel C2H2-type zinc-finger protein family.

It localises to the nucleus. May be involved in transcriptional regulation. The polypeptide is Zinc finger protein 710 (Znf710) (Mus musculus (Mouse)).